We begin with the raw amino-acid sequence, 333 residues long: Homocysteine S-methyltransferase 2 (333 aa).

The 320-residue stretch at 8–327 (SMKDFLKQTG…TTIRAIHKRL (320 aa)) folds into the Hcy-binding domain. Cysteine 245, cysteine 312, and cysteine 313 together coordinate Zn(2+).

Monomer. Requires Zn(2+) as cofactor. In terms of tissue distribution, expressed predominantly in roots. Expressed in rosette leaves, cauline leaves and developing seeds.

The enzyme catalyses S-methyl-L-methionine + L-homocysteine = 2 L-methionine + H(+). Functionally, catalyzes methyl transfer from S-methylmethionine (SMM) to adenosyl-L-homocysteine (AdoMet). SMM degradation (by HMT-1, HMT-2 and HMT-3) and biosynthesis (by MMT1) constitute the SMM cycle in plants, which is probably required to achieve short term control of AdoMet level. The polypeptide is Homocysteine S-methyltransferase 2 (HMT-2) (Arabidopsis thaliana (Mouse-ear cress)).